We begin with the raw amino-acid sequence, 399 residues long: Elongation factor Tu (399 aa).

The 200-residue stretch at 10–209 (KPHVNIGTIG…AVDEYIPTPE (200 aa)) folds into the tr-type G domain. The segment at 19–26 (GHVDHGKT) is G1. 19 to 26 (GHVDHGKT) contributes to the GTP binding site. A Mg(2+)-binding site is contributed by Thr-26. Positions 60–64 (GITIA) are G2. The G3 stretch occupies residues 81–84 (DCPG). GTP is bound by residues 81–85 (DCPGH) and 136–139 (NKED). The G4 stretch occupies residues 136–139 (NKED). Residues 174–176 (SAL) are G5.

The protein belongs to the TRAFAC class translation factor GTPase superfamily. Classic translation factor GTPase family. EF-Tu/EF-1A subfamily. As to quaternary structure, monomer.

Its subcellular location is the cytoplasm. The catalysed reaction is GTP + H2O = GDP + phosphate + H(+). GTP hydrolase that promotes the GTP-dependent binding of aminoacyl-tRNA to the A-site of ribosomes during protein biosynthesis. The sequence is that of Elongation factor Tu from Nitratiruptor sp. (strain SB155-2).